We begin with the raw amino-acid sequence, 665 residues long: Fructose-1,6-bisphosphatase class 3 (665 aa).

This sequence belongs to the FBPase class 3 family. The cofactor is Mn(2+).

The catalysed reaction is beta-D-fructose 1,6-bisphosphate + H2O = beta-D-fructose 6-phosphate + phosphate. It participates in carbohydrate biosynthesis; gluconeogenesis. In Clostridium novyi (strain NT), this protein is Fructose-1,6-bisphosphatase class 3.